The primary structure comprises 1025 residues: Error-prone DNA polymerase (1025 aa).

This sequence belongs to the DNA polymerase type-C family. DnaE2 subfamily.

It is found in the cytoplasm. It catalyses the reaction DNA(n) + a 2'-deoxyribonucleoside 5'-triphosphate = DNA(n+1) + diphosphate. DNA polymerase involved in damage-induced mutagenesis and translesion synthesis (TLS). It is not the major replicative DNA polymerase. The polypeptide is Error-prone DNA polymerase (Alkalilimnicola ehrlichii (strain ATCC BAA-1101 / DSM 17681 / MLHE-1)).